A 512-amino-acid polypeptide reads, in one-letter code: Threonine synthase (512 aa).

Residue Lys-121 is modified to N6-(pyridoxal phosphate)lysine. Residues Gly-273, Asn-274, Phe-275, Asp-277, and Thr-445 each coordinate pyridoxal 5'-phosphate.

This sequence belongs to the threonine synthase family. Pyridoxal 5'-phosphate serves as cofactor.

The catalysed reaction is O-phospho-L-homoserine + H2O = L-threonine + phosphate. It participates in amino-acid biosynthesis; L-threonine biosynthesis; L-threonine from L-aspartate: step 5/5. Functionally, catalyzes the gamma-elimination of phosphate from L-phosphohomoserine and the beta-addition of water to produce L-threonine. The protein is Threonine synthase (THR4) of Eremothecium gossypii (strain ATCC 10895 / CBS 109.51 / FGSC 9923 / NRRL Y-1056) (Yeast).